Consider the following 310-residue polypeptide: Putative F-box protein PP2-B2 (310 aa).

Positions 1–34 (MIQSTMGHKQSVDSRGKGRKVPGSSSMVQKHRVE) are disordered. The 47-residue stretch at 44–90 (PSLFDNLPEDCISNIISFTSPRDACVAASVSKTFESAVNSDSVWDKF) folds into the F-box domain.

The polypeptide is Putative F-box protein PP2-B2 (PP2B2) (Arabidopsis thaliana (Mouse-ear cress)).